The primary structure comprises 195 residues: Pyruvoyl-dependent arginine decarboxylase AaxB (195 aa).

At S53 the chain carries Pyruvic acid (Ser).

This sequence belongs to the pyruvoyl-dependent arginine decarboxylase family. In terms of assembly, trimer of an alpha-beta dimer. Pyruvate is required as a cofactor.

It is found in the cytoplasm. It catalyses the reaction L-arginine + H(+) = agmatine + CO2. Part of the AaxABC system, catalyzes the decarboxylation of L-arginine. The arginine uptake by the bacterium in the macrophage may be a virulence factor against the host innate immune response. The protein is Pyruvoyl-dependent arginine decarboxylase AaxB (aaxB) of Chlamydia abortus (strain DSM 27085 / S26/3) (Chlamydophila abortus).